The following is an 802-amino-acid chain: Acetyl-CoA decarbonylase/synthase complex subunit alpha (802 aa).

Residues C69, C72, C73, C75, C80, and C90 each contribute to the [4Fe-4S] cluster site. H113 is a CO binding site. [Ni-4Fe-4S] cluster-binding residues include H246, C274, and C319. 2 consecutive 4Fe-4S ferredoxin-type domains span residues E404–A432 and S442–K473. [4Fe-4S] cluster contacts are provided by C413, C416, C419, C423, C451, C454, C457, and C461. [Ni-4Fe-4S] cluster-binding residues include C519, C548, and C583.

This sequence belongs to the Ni-containing carbon monoxide dehydrogenase family. As to quaternary structure, heterotetramer of two alpha and two epsilon subunits. The ACDS complex is made up of alpha, epsilon, beta, gamma and delta subunits with a probable stoichiometry of (alpha(2)epsilon(2))(4)-beta(8)-(gamma(1)delta(1))(8). The cofactor is [4Fe-4S] cluster. Requires [Ni-4Fe-4S] cluster as cofactor.

It carries out the reaction CO + 2 oxidized [2Fe-2S]-[ferredoxin] + H2O = 2 reduced [2Fe-2S]-[ferredoxin] + CO2 + 2 H(+). It functions in the pathway one-carbon metabolism; methanogenesis from acetate. Functionally, part of the ACDS complex that catalyzes the reversible cleavage of acetyl-CoA, allowing growth on acetate as sole source of carbon and energy. The alpha-epsilon subcomponent functions as a carbon monoxide dehydrogenase. The chain is Acetyl-CoA decarbonylase/synthase complex subunit alpha from Methanococcoides burtonii (strain DSM 6242 / NBRC 107633 / OCM 468 / ACE-M).